Here is a 436-residue protein sequence, read N- to C-terminus: Carboxypeptidase A5 (436 aa).

The first 33 residues, 1 to 33 (MQGTPGGGTRPGPSPVDRRTLLVFSFILAAALG), serve as a signal peptide directing secretion. Residues 34–126 (QMNFTGDQVL…ERQAMAKSRR (93 aa)) constitute a propeptide, activation peptide. The Peptidase M14 domain maps to 138–431 (SYHTLEEIYS…MALRTIMEHT (294 aa)). Positions 196 and 199 each coordinate Zn(2+). Residues 196–199 (HSRE), Arg-254, and 271–272 (NR) contribute to the substrate site. A disulfide bridge links Cys-265 with Cys-288. A Zn(2+)-binding site is contributed by His-323. Substrate contacts are provided by residues 324–325 (SY) and Tyr-375. Catalysis depends on Glu-397, which acts as the Proton donor/acceptor.

The protein belongs to the peptidase M14 family. Zn(2+) is required as a cofactor. In terms of tissue distribution, expression is very low or not detectable.

It is found in the secreted. This chain is Carboxypeptidase A5 (CPA5), found in Homo sapiens (Human).